Consider the following 200-residue polypeptide: Ribonuclease HII (200 aa).

Residues 10–200 (LIEAGCDEAG…LGDGQLNLNF (191 aa)) enclose the RNase H type-2 domain. 3 residues coordinate a divalent metal cation: Asp-16, Glu-17, and Asp-108.

It belongs to the RNase HII family. The cofactor is Mn(2+). It depends on Mg(2+) as a cofactor.

It is found in the cytoplasm. The enzyme catalyses Endonucleolytic cleavage to 5'-phosphomonoester.. Its function is as follows. Endonuclease that specifically degrades the RNA of RNA-DNA hybrids. The chain is Ribonuclease HII from Bacteroides thetaiotaomicron (strain ATCC 29148 / DSM 2079 / JCM 5827 / CCUG 10774 / NCTC 10582 / VPI-5482 / E50).